A 184-amino-acid chain; its full sequence is Regulatory protein RecX (184 aa).

Positions 1 to 21 (MTLFPLPSTSDPAEADESTKR) are disordered.

Belongs to the RecX family.

The protein resides in the cytoplasm. Its function is as follows. Modulates RecA activity. This Mycolicibacterium vanbaalenii (strain DSM 7251 / JCM 13017 / BCRC 16820 / KCTC 9966 / NRRL B-24157 / PYR-1) (Mycobacterium vanbaalenii) protein is Regulatory protein RecX.